Reading from the N-terminus, the 4146-residue chain is DNA-dependent protein kinase catalytic subunit (4146 aa).

HEAT repeat units follow at residues 308 to 343, 925 to 962, 1026 to 1062, and 1075 to 1111; these read DDYQSLFEVISKWCGHTNGEMKKLAFAALDSFLKQI, VIYLDMFLPHITELALSTSDRQTKVAACELLHSIVAFM, QDTVALLEAILTGIVDPVDSTLRDFCGQCIQEFLRWS, and PVNTTSLFKRLYSLALHPNAFKRLGAALAFNNIYRDF. TPR repeat units follow at residues 1745–1778 and 1974–2007; these read PMKSDEFPKGTLKFNNYVDCIKKFLDALELSQSP and VFSELKFYQGFLFTEKKEKNLLIFENLIDLQRNY. S2075 carries the phosphoserine; by autocatalysis modification. The residue at position 2631 (T2631) is a Phosphothreonine; by autocatalysis. Position 2634 is a phosphoserine; by autocatalysis (S2634). Phosphothreonine; by autocatalysis occurs at positions 2659 and 2668. The region spanning 2873–3556 is the FAT domain; sequence FIACVQDMCY…VYPFMVSGES (684 aa). A PI3K/PI4K catalytic domain is found at 3739 to 4071; that stretch reads FDERVSVMAS…IHCAKRKLDG (333 aa). The segment at 3745–3751 is G-loop; it reads VMASIRK. The catalytic loop stretch occupies residues 3937 to 3945; it reads GIGDRHLSN. Residues 3957 to 3982 are activation loop; that stretch reads GIDFGHAFGTATQFLPVPELMPFRLT. Residues 4114–4146 enclose the FATC domain; that stretch reads DGLTEETQVQCLIDQATDPNILGRVWKGWEPWI.

Belongs to the PI3/PI4-kinase family. In terms of assembly, DNA-PK is a heterotrimer of prkdc and the Ku dimer (composed of xrcc6/Ku70 and xrcc5/Ku86). Component of the core long-range non-homologous end joining (NHEJ) complex (also named DNA-PK complex) composed of prkdc, lig4, xrcc4, xrcc6/ku70, xrcc5/ku86 and nhej1/xlf. Additional component of the NHEJ complex includes paxx. Following autophosphorylation, prkdc dissociates from DNA. Autophosphorylated at two clusters, the T2609 cluster and the S2056 cluster. Autophosphorylated on Ser-2075, Thr-2631, Thr-2659 and Thr-2668. Ser-2075 and Thr-2668 are DNA damage-inducible phosphorylation sites (inducible with ionizing radiation, IR) dephosphorylated by PPP5C. Autophosphorylation induces a conformational change that leads to remodeling of the DNA-PK complex, requisite for efficient end processing and DNA repair. Autophosphorylation in trans within DNA-PK complexes loaded on DNA ends leads to the dissociation of PRKDC from DNA and the transition into the short-range NHEJ complex. Autophosphorylation of the T2609 cluster is required for hematopoietic development and protein synthesis in erythrocytes precursors.

It localises to the nucleus. The protein localises to the nucleolus. It carries out the reaction L-seryl-[protein] + ATP = O-phospho-L-seryl-[protein] + ADP + H(+). It catalyses the reaction L-threonyl-[protein] + ATP = O-phospho-L-threonyl-[protein] + ADP + H(+). Functionally, serine/threonine-protein kinase that acts as a molecular sensor for DNA damage. Involved in DNA nonhomologous end joining (NHEJ) required for double-strand break (DSB) repair and V(D)J recombination. Must be bound to DNA to express its catalytic properties. Promotes processing of hairpin DNA structures in V(D)J recombination by activation of the hairpin endonuclease artemis (DCLRE1C). Recruited by XRCC5 and XRCC6 to DNA ends and is required to (1) protect and align broken ends of DNA, thereby preventing their degradation, (2) and sequester the DSB for repair by NHEJ. Acts as a scaffold protein to aid the localization of DNA repair proteins to the site of damage. The assembly of the DNA-PK complex at DNA ends is also required for the NHEJ ligation step. Found at the ends of chromosomes, suggesting a further role in the maintenance of telomeric stability and the prevention of chromosomal end fusion. As part of the DNA-PK complex, involved in the early steps of ribosome assembly by promoting the processing of precursor rRNA into mature 18S rRNA in the small-subunit processome. Recognizes the substrate consensus sequence [ST]-Q. Phosphorylates 'Ser-139' of histone variant H2AX, thereby regulating DNA damage response mechanism. The polypeptide is DNA-dependent protein kinase catalytic subunit (prkdc) (Xenopus laevis (African clawed frog)).